The sequence spans 622 residues: MRVSAGLMIGGSCVATAATVLNAFVINKQFYPSIVYLSKSNASMAVLYFQGIVLVYLMFQLLKSILFGDLRAAEAEHLSERTWHAVLETCLAFTVFRDDFSAMFVMQFIGLLFIKCFHWLADDRVDMMERSPVITLRFHLRMMTVLAALGFADSYFVSSAYFSTITKGASSQIVFGFEYAILLALVLHVTIKYLLHMHDLRNPQSWDNKAVYLLYAELLINLIRCVLYGFFAVIMLRVHTFPLFSVRPFYQSVRALHKAFLDVILSRRAINAMNSQFPVVSNDELSAMDATCIICREEMTVESSPKRLPCSHVFHAHCLRSWFQRQQTCPTCRTDIWQGRNGAAGGANAGGAAENNAAGAPPAAGIPPFLPFLGHQFGFPQAAAGAQVGGAQAGGHPGPFPHQIFYAPAPANRPEFMNLAPPPMPMAGPPGMFPMMPPPPIPQPNAAPGESSNAEPPGRPNFDRFSVEELHRMEGDMRDAILARIQAMENIMVILESAQVQMVQLAAITPLRRPVPTAEASEEETATASSVPTSVPSEEPSPAPSTPETASAPRSMFRGNLFNDTQSTSTPSTSAGPQPSLTPSTSSVPSTSSVRTPEADEVRQRRLAHLNARFPPPNPEHE.

An N-terminal signal peptide occupies residues 1 to 23 (MRVSAGLMIGGSCVATAATVLNA). The Lumenal portion of the chain corresponds to 24 to 41 (FVINKQFYPSIVYLSKSN). A helical membrane pass occupies residues 42 to 62 (ASMAVLYFQGIVLVYLMFQLL). Residues 63–99 (KSILFGDLRAAEAEHLSERTWHAVLETCLAFTVFRDD) are Cytoplasmic-facing. Residues 100–120 (FSAMFVMQFIGLLFIKCFHWL) form a helical membrane-spanning segment. Residues 121–141 (ADDRVDMMERSPVITLRFHLR) are Lumenal-facing. A helical transmembrane segment spans residues 142 to 162 (MMTVLAALGFADSYFVSSAYF). Over 163–170 (STITKGAS) the chain is Cytoplasmic. A helical transmembrane segment spans residues 171–191 (SQIVFGFEYAILLALVLHVTI). Topologically, residues 192-215 (KYLLHMHDLRNPQSWDNKAVYLLY) are lumenal. Residues 216 to 236 (AELLINLIRCVLYGFFAVIML) traverse the membrane as a helical segment. Residues 237–622 (RVHTFPLFSV…RFPPPNPEHE (386 aa)) are Cytoplasmic-facing. Residues 292-333 (CIICREEMTVESSPKRLPCSHVFHAHCLRSWFQRQQTCPTCR) form an RING-type; atypical zinc finger. The span at 436–445 (MPPPPIPQPN) shows a compositional bias: pro residues. Disordered stretches follow at residues 436-463 (MPPP…PNFD) and 514-622 (PVPT…PEHE). Residues 526–538 (ATASSVPTSVPSE) are compositionally biased toward low complexity. Polar residues predominate over residues 562-577 (FNDTQSTSTPSTSAGP). Residues 579–596 (PSLTPSTSSVPSTSSVRT) are compositionally biased toward low complexity.

It belongs to the HRD1 family. In terms of assembly, homodimer.

The protein resides in the endoplasmic reticulum membrane. The catalysed reaction is S-ubiquitinyl-[E2 ubiquitin-conjugating enzyme]-L-cysteine + [acceptor protein]-L-lysine = [E2 ubiquitin-conjugating enzyme]-L-cysteine + N(6)-ubiquitinyl-[acceptor protein]-L-lysine.. Its pathway is protein modification; protein ubiquitination. Its function is as follows. Acts as an E3 ubiquitin-protein ligase which accepts ubiquitin specifically from endoplasmic reticulum-associated ubc-7 E2 ligase and transfers it to substrates, promoting their degradation. Component of the endoplasmic reticulum quality control (ERQC) system, which is also called the ER-associated degradation (ERAD) system, involved in ubiquitin-dependent degradation of misfolded endoplasmic reticulum proteins. Also promotes the degradation of normal but naturally short-lived proteins. Protects cells from ER stress-induced apoptosis. Thought to play a role together with hsp-3 in developmental growth and function of intestinal cells and to play a role together with hsp-4 in gonad formation. The chain is E3 ubiquitin-protein ligase hrd-1 from Caenorhabditis briggsae.